Here is a 273-residue protein sequence, read N- to C-terminus: MSYLPTYSNDLPAGPQGQRRRNNGNENDARQGYGQQSVPMVIRRLFKTPKNLDLETASWEMFHLIFHPRKAYRSIYYQRQTKNQWARDDPSFFIFQIALISLSSIIWSIYNSGFNNDSDMGALSIIGHFFKSLVMMVILDFFIFGFIMATIFYLLLNRSHFKFKSSQNSVVEWAYCFDVHCNSFLIILLCLYFIQFLLLPIINLQNWISLLIGNSLYCFAIGHYFILTFYGYNQLPFLKNLNFILLPTLGLSIIYLISLFGIDLSKKLSFYNY.

The segment at 1-33 (MSYLPTYSNDLPAGPQGQRRRNNGNENDARQGY) is disordered. S2 carries the post-translational modification N-acetylserine. Topologically, residues 2-89 (SYLPTYSNDL…QTKNQWARDD (88 aa)) are cytoplasmic. The helical transmembrane segment at 90–110 (PSFFIFQIALISLSSIIWSIY) threads the bilayer. The Lumenal portion of the chain corresponds to 111–134 (NSGFNNDSDMGALSIIGHFFKSLV). The helical transmembrane segment at 135 to 155 (MMVILDFFIFGFIMATIFYLL) threads the bilayer. Topologically, residues 156-175 (LNRSHFKFKSSQNSVVEWAY) are cytoplasmic. The chain crosses the membrane as a helical span at residues 176-196 (CFDVHCNSFLIILLCLYFIQF). The Lumenal segment spans residues 197–216 (LLLPIINLQNWISLLIGNSL). Residues 217-237 (YCFAIGHYFILTFYGYNQLPF) form a helical membrane-spanning segment. The Cytoplasmic segment spans residues 238–242 (LKNLN). The chain crosses the membrane as a helical span at residues 243–263 (FILLPTLGLSIIYLISLFGID). Topologically, residues 264 to 273 (LSKKLSFYNY) are lumenal.

Belongs to the unc-50 family. As to quaternary structure, interacts with GEA1 and GEA2.

The protein resides in the golgi apparatus membrane. It is found in the endoplasmic reticulum membrane. This chain is Protein GMH1 (GMH1), found in Saccharomyces cerevisiae (strain ATCC 204508 / S288c) (Baker's yeast).